The sequence spans 224 residues: ATP synthase subunit a (224 aa).

Transmembrane regions (helical) follow at residues 17 to 37 (FSLNWLSTFLGLLMIPSIYWL), 72 to 92 (IFISLFSLILFNNFMGLFPYI), 99 to 119 (LTLTLSLALPLWLCFMLYGWI), 125 to 145 (MFAHLVPQGTPAILMPFMVCI), 166 to 186 (IAGHLLLTLLGNTGPSMSYIL), and 187 to 207 (VTFLLMAQIALLVLESAVAMI).

The protein belongs to the ATPase A chain family. As to quaternary structure, F-type ATPases have 2 components, CF(1) - the catalytic core - and CF(0) - the membrane proton channel. CF(1) has five subunits: alpha(3), beta(3), gamma(1), delta(1), epsilon(1). CF(0) has three main subunits: a, b and c.

It localises to the mitochondrion inner membrane. Functionally, mitochondrial membrane ATP synthase (F(1)F(0) ATP synthase or Complex V) produces ATP from ADP in the presence of a proton gradient across the membrane which is generated by electron transport complexes of the respiratory chain. F-type ATPases consist of two structural domains, F(1) - containing the extramembraneous catalytic core and F(0) - containing the membrane proton channel, linked together by a central stalk and a peripheral stalk. During catalysis, ATP synthesis in the catalytic domain of F(1) is coupled via a rotary mechanism of the central stalk subunits to proton translocation. Key component of the proton channel; it may play a direct role in the translocation of protons across the membrane. This is ATP synthase subunit a (mt:ATPase6) from Drosophila melanogaster (Fruit fly).